The chain runs to 1079 residues: DNA annealing helicase and endonuclease ZRANB3 (1079 aa).

Residues 46 to 208 (IFALKRNGRC…FMQIEALFPQ (163 aa)) enclose the Helicase ATP-binding domain. Positions 46–481 (IFALKRNGRC…GRKEKIQAEE (436 aa)) are DNA annealing helicase activity. An ATP-binding site is contributed by 59–66 (DEMGLGKT). The short motif at 157–160 (DESH) is the DEAH box element. Residues 325 to 481 (AVKDYIKMML…GRKEKIQAEE (157 aa)) enclose the Helicase C-terminal domain. The PIP-box signature appears at 519–526 (QHDIRSFF). Position 569 is a phosphoserine (Ser569). The disordered stretch occupies residues 582 to 601 (ASEDHCSPSEETPSQSKQIR). A compositionally biased stretch (polar residues) spans 590-600 (SEETPSQSKQI). The RanBP2-type zinc finger occupies 621 to 650 (PVEGWQCSLCTYINNSELPYCEMCETPQGS). At Cys630 the chain carries (Microbial infection) S-methylcysteine. Positions 689-725 (LAQSEPGQLADSKEETPKIEKEDGLTSQPGNEQWKSS) are disordered. A compositionally biased stretch (basic and acidic residues) spans 699-712 (DSKEETPKIEKEDG). A compositionally biased stretch (polar residues) spans 713–725 (LTSQPGNEQWKSS). One can recognise an HNH domain in the interval 1011–1051 (PGEGHFWQVDHIKPVYGGGGQCSLDNLQTLCTVCHKERTAR). Residues 1011 to 1079 (PGEGHFWQVD…SDITRFLVKK (69 aa)) form an endonuclease activity region. The short motif at 1074-1078 (RFLVK) is the APIM motif element.

The protein belongs to the SNF2/RAD54 helicase family. In terms of assembly, interacts (via PIP-box and RanBP2-type zinc finger) with PCNA (when PCNA is polyubiquitinated via 'Lys-63'-linked polyubiquitin). In terms of processing, (Microbial infection) Methylation at Cys-630 by enteropathogenic E.coli protein NleE or S.flexneri protein OspZ: methylation disrupts ability to bind 'Lys-63'-linked ubiquitin.

It localises to the nucleus. Its subcellular location is the chromosome. DNA annealing helicase and endonuclease required to maintain genome stability at stalled or collapsed replication forks by facilitating fork restart and limiting inappropriate recombination that could occur during template switching events. Recruited to the sites of stalled DNA replication by polyubiquitinated PCNA and acts as a structure-specific endonuclease that cleaves the replication fork D-loop intermediate, generating an accessible 3'-OH group in the template of the leading strand, which is amenable to extension by DNA polymerase. In addition to endonuclease activity, also catalyzes the fork regression via annealing helicase activity in order to prevent disintegration of the replication fork and the formation of double-strand breaks. The chain is DNA annealing helicase and endonuclease ZRANB3 from Homo sapiens (Human).